The primary structure comprises 860 residues: DNA gyrase subunit A (860 aa).

The region spanning 34–503 is the Topo IIA-type catalytic domain; it reads LPDARDGLKP…EDGELIDTDL (470 aa). Catalysis depends on Tyr122, which acts as the O-(5'-phospho-DNA)-tyrosine intermediate. A GyrA-box motif is present at residues 530–536; sequence QNRATRG.

This sequence belongs to the type II topoisomerase GyrA/ParC subunit family. As to quaternary structure, heterotetramer, composed of two GyrA and two GyrB chains. In the heterotetramer, GyrA contains the active site tyrosine that forms a transient covalent intermediate with DNA, while GyrB binds cofactors and catalyzes ATP hydrolysis.

It is found in the cytoplasm. The catalysed reaction is ATP-dependent breakage, passage and rejoining of double-stranded DNA.. Its function is as follows. A type II topoisomerase that negatively supercoils closed circular double-stranded (ds) DNA in an ATP-dependent manner to modulate DNA topology and maintain chromosomes in an underwound state. Negative supercoiling favors strand separation, and DNA replication, transcription, recombination and repair, all of which involve strand separation. Also able to catalyze the interconversion of other topological isomers of dsDNA rings, including catenanes and knotted rings. Type II topoisomerases break and join 2 DNA strands simultaneously in an ATP-dependent manner. The chain is DNA gyrase subunit A from Synechocystis sp. (strain ATCC 27184 / PCC 6803 / Kazusa).